Here is a 208-residue protein sequence, read N- to C-terminus: Glutathione S-transferase (208 aa).

The GST N-terminal domain occupies 1–78 (MSYKLTYFPI…HLARKFNLNG (78 aa)). Glutathione contacts are provided by residues Y7, K42, 49-50 (QL), and 62-63 (QS). The 121-residue stretch at 80–200 (NNAETSYVDM…YCAKRNASKM (121 aa)) folds into the GST C-terminal domain.

Belongs to the GST superfamily. Pi family. As to quaternary structure, homodimer.

The catalysed reaction is RX + glutathione = an S-substituted glutathione + a halide anion + H(+). Functionally, conjugation of reduced glutathione to a wide number of exogenous and endogenous hydrophobic electrophiles. The sequence is that of Glutathione S-transferase from Dirofilaria immitis (Canine heartworm).